Consider the following 87-residue polypeptide: Large ribosomal subunit protein eL31 (87 aa).

This sequence belongs to the eukaryotic ribosomal protein eL31 family.

In Methanocorpusculum labreanum (strain ATCC 43576 / DSM 4855 / Z), this protein is Large ribosomal subunit protein eL31.